The chain runs to 803 residues: Nuclear factor of activated T-cells, cytoplasmic 1 (803 aa).

The calcineurin-binding stretch occupies residues 101-106 (PRIEIT). The transactivation domain A (TAD-A) stretch occupies residues 109 to 199 (LGLHHNSSQF…CVSPKTTDPE (91 aa)). The segment covering 181 to 195 (PQTSPWQSPCVSPKT) has biased composition (polar residues). A disordered region spans residues 181 to 279 (PQTSPWQSPC…GSPRVSVTDD (99 aa)). Repeat copies occupy residues 184–200 (SPWQSPCVSPKTTDPEE) and 214–230 (SPRHSPSTSPRTSVTEE). The interval 184–279 (SPWQSPCVSP…GSPRVSVTDD (96 aa)) is 3 X SP repeats. Ser214 and Ser218 each carry phosphoserine. The span at 214-231 (SPRHSPSTSPRTSVTEES) shows a compositional bias: low complexity. Ser226 is subject to Phosphoserine; by PKA. The short motif at 246 to 248 (KRK) is the Nuclear localization signal element. The stretch at 263–279 (SPTPSPQGSPRVSVTDD) is repeat 3. Phosphoserine; by PKA is present on Ser275. Positions 291 to 302 (SAIVAAINALST) match the Nuclear export signal motif. Residues 389 to 571 (PSLPALDWQL…NPIECSQRSA (183 aa)) enclose the RHD domain. Residues 418 to 425 (RAHYETEG) mediate DNA binding. The Nuclear localization signal signature appears at 661–663 (KRK). The segment at 723-803 (LMPGFPPRPQ…QPQVSPTSSG (81 aa)) is disordered. Residues 778 to 792 (SGVPPGPPQPPPPTL) show a composition bias toward pro residues. The segment covering 793-803 (LQPQVSPTSSG) has biased composition (low complexity).

In terms of assembly, member of the multicomponent NFATC transcription complex that consists of at least two components, a pre-existing cytoplasmic component NFATC2 and an inducible nuclear component NFATC1. Other members such as NFATC4, NFATC3 or members of the activating protein-1 family, MAF, GATA4 and Cbp/p300 can also bind the complex. NFATC proteins bind to DNA as monomers. Interacts with HOMER2 and HOMER3; this interaction may compete with calcineurin/PPP3CA-binding and hence prevent NFATC1 dephosphorylation and activation. Interacts with TLE6/GRG6. In terms of processing, phosphorylated by NFATC-kinase and GSK3B; phosphorylation induces NFATC1 nuclear exit and dephosphorylation by calcineurin promotes nuclear import. Phosphorylation by PKA and DYRK2 negatively modulates nuclear accumulation, and promotes subsequent phosphorylation by GSK3B or casein kinase 1.

It localises to the cytoplasm. It is found in the nucleus. Plays a role in the inducible expression of cytokine genes in T-cells, especially in the induction of the IL-2 or IL-4 gene transcription. Also controls gene expression in embryonic cardiac cells. Could regulate not only the activation and proliferation but also the differentiation and programmed death of T-lymphocytes as well as lymphoid and non-lymphoid cells. Required for osteoclastogenesis and regulates many genes important for osteoclast differentiation and function. The polypeptide is Nuclear factor of activated T-cells, cytoplasmic 1 (Bos taurus (Bovine)).